The following is a 635-amino-acid chain: Chaperone protein HtpG (635 aa).

An a; substrate-binding region spans residues 1-343 (MSVETQKETL…SNDLSLNVSR (343 aa)). Positions 344 to 560 (EILQKDPIID…EQDMGLQMRQ (217 aa)) are b. The segment at 561 to 635 (ILEASGQKVP…LNKLLVELSV (75 aa)) is c.

Belongs to the heat shock protein 90 family. Homodimer.

The protein localises to the cytoplasm. Functionally, molecular chaperone. Has ATPase activity. This chain is Chaperone protein HtpG, found in Pseudomonas syringae pv. tomato (strain ATCC BAA-871 / DC3000).